A 592-amino-acid polypeptide reads, in one-letter code: Aspartate--tRNA ligase (592 aa).

Residue Glu171 participates in L-aspartate binding. The segment at 195–198 (QLFK) is aspartate. Arg217 is a binding site for L-aspartate. ATP-binding positions include 217–219 (RDE) and Gln226. His448 provides a ligand contact to L-aspartate. Residue Glu482 coordinates ATP. L-aspartate is bound at residue Arg489. Residue 534–537 (GLDR) coordinates ATP.

The protein belongs to the class-II aminoacyl-tRNA synthetase family. Type 1 subfamily. In terms of assembly, homodimer.

The protein resides in the cytoplasm. The catalysed reaction is tRNA(Asp) + L-aspartate + ATP = L-aspartyl-tRNA(Asp) + AMP + diphosphate. Catalyzes the attachment of L-aspartate to tRNA(Asp) in a two-step reaction: L-aspartate is first activated by ATP to form Asp-AMP and then transferred to the acceptor end of tRNA(Asp). The polypeptide is Aspartate--tRNA ligase (Vibrio campbellii (strain ATCC BAA-1116)).